A 196-amino-acid chain; its full sequence is Large ribosomal subunit protein bL9 (196 aa).

This sequence belongs to the bacterial ribosomal protein bL9 family.

Its function is as follows. Binds to the 23S rRNA. The chain is Large ribosomal subunit protein bL9 from Bradyrhizobium sp. (strain ORS 278).